Reading from the N-terminus, the 76-residue chain is MLKELINKLLWHPDYNPEDYIINYLHRGAENDEKSVPLKNIVIEDSFLVFDETHIPFHRILEIVNTKTGEIIYKKR.

This sequence belongs to the UPF0248 family.

In Methanococcus maripaludis (strain DSM 14266 / JCM 13030 / NBRC 101832 / S2 / LL), this protein is UPF0248 protein MMP0286.